The primary structure comprises 338 residues: uncharacterized protein (338 aa).

The protein belongs to the MG032/MG096/MG288 family.

This is an uncharacterized protein from Mycoplasma pneumoniae (strain ATCC 29342 / M129 / Subtype 1) (Mycoplasmoides pneumoniae).